Consider the following 270-residue polypeptide: tRNA pseudouridine synthase A (270 aa).

Residue aspartate 51 is the Nucleophile of the active site. Tyrosine 109 serves as a coordination point for substrate.

This sequence belongs to the tRNA pseudouridine synthase TruA family. Homodimer.

It carries out the reaction uridine(38/39/40) in tRNA = pseudouridine(38/39/40) in tRNA. Functionally, formation of pseudouridine at positions 38, 39 and 40 in the anticodon stem and loop of transfer RNAs. This is tRNA pseudouridine synthase A from Burkholderia ambifaria (strain ATCC BAA-244 / DSM 16087 / CCUG 44356 / LMG 19182 / AMMD) (Burkholderia cepacia (strain AMMD)).